The primary structure comprises 86 residues: Toxin Tpa4 (86 aa).

An N-terminal signal peptide occupies residues 1-19 (MNYFVLIAVACLLTAGTES). Positions 21-82 (KDGYPLEYDN…EPIKTSGRCR (62 aa)) constitute an LCN-type CS-alpha/beta domain. Cystine bridges form between cysteine 31-cysteine 81, cysteine 35-cysteine 57, cysteine 43-cysteine 64, and cysteine 47-cysteine 66. Residue proline 83 is modified to Proline amide.

It belongs to the long (4 C-C) scorpion toxin superfamily. Sodium channel inhibitor family. Alpha subfamily. As to expression, expressed by the venom gland.

It is found in the secreted. Functionally, alpha toxins bind voltage-independently at site-3 of sodium channels (Nav) and inhibit the inactivation of the activated channels, thereby blocking neuronal transmission. This chain is Toxin Tpa4, found in Tityus pachyurus (Colombian scorpion).